The following is a 462-amino-acid chain: Myo-inositol transporter 3B (462 aa).

10 helical membrane-spanning segments follow: residues 1 to 21, 31 to 51, 61 to 81, 91 to 111, 194 to 214, 218 to 238, 245 to 265, 289 to 309, 324 to 344, and 354 to 374; these read MAIL…ASSY, IILG…ITET, IGVN…IGAG, LLFA…HYLP, LCGF…LGLS, LGGL…MSLV, GLML…IIGF, VVIG…SHLV, GSGV…VSYL, and GTYG…VFCF.

It belongs to the major facilitator superfamily. Sugar transporter (TC 2.A.1.1) family.

The protein localises to the cell membrane. It carries out the reaction myo-inositol(out) + H(+)(out) = myo-inositol(in) + H(+)(in). In terms of biological role, transporter for myo-inositol. In Cryptococcus neoformans var. grubii serotype A (strain H99 / ATCC 208821 / CBS 10515 / FGSC 9487) (Filobasidiella neoformans var. grubii), this protein is Myo-inositol transporter 3B.